Here is a 405-residue protein sequence, read N- to C-terminus: Tryptophan synthase beta chain (405 aa).

K98 bears the N6-(pyridoxal phosphate)lysine mark.

It belongs to the TrpB family. As to quaternary structure, tetramer of two alpha and two beta chains. Requires pyridoxal 5'-phosphate as cofactor.

The enzyme catalyses (1S,2R)-1-C-(indol-3-yl)glycerol 3-phosphate + L-serine = D-glyceraldehyde 3-phosphate + L-tryptophan + H2O. It functions in the pathway amino-acid biosynthesis; L-tryptophan biosynthesis; L-tryptophan from chorismate: step 5/5. In terms of biological role, the beta subunit is responsible for the synthesis of L-tryptophan from indole and L-serine. This Xanthomonas oryzae pv. oryzae (strain PXO99A) protein is Tryptophan synthase beta chain.